Reading from the N-terminus, the 245-residue chain is MFKAAINAELLKDAIASLAVIVDEVRFKIKPEGISVKAVDPANVAMGIFELGSSAFEEYSADECEIGIDLNKITDLLGIADRNDTVRMELDEGSNKLLIDVGGLSYTLSLLDPSTIRAEPRVPQLELPAKVVLNGADLRRAVKAAEKISDHMLMGVSGDTFYMEAKGDTDQVRLEMGRDQLIDLKAGEACSLFSLDYLTDIVKPTNKVNEVTLSLGRDFPILIDFEIANGAGRISYLLAPRIESD.

The protein belongs to the PCNA family. Homotrimer. The subunits circularize to form a toroid; DNA passes through its center. Replication factor C (RFC) is required to load the toroid on the DNA.

Sliding clamp subunit that acts as a moving platform for DNA processing. Responsible for tethering the catalytic subunit of DNA polymerase and other proteins to DNA during high-speed replication. The polypeptide is DNA polymerase sliding clamp (Methanosarcina mazei (strain ATCC BAA-159 / DSM 3647 / Goe1 / Go1 / JCM 11833 / OCM 88) (Methanosarcina frisia)).